The chain runs to 349 residues: GDSL esterase/lipase At1g58725 (349 aa).

Positions 1-19 are cleaved as a signal peptide; sequence MKIQILLFALVLIFVEANA. N-linked (GlcNAc...) asparagine glycosylation is present at N25. S37 acts as the Nucleophile in catalysis. Residue N316 is glycosylated (N-linked (GlcNAc...) asparagine). Residues D324 and H327 contribute to the active site.

It belongs to the 'GDSL' lipolytic enzyme family.

The protein resides in the secreted. This chain is GDSL esterase/lipase At1g58725, found in Arabidopsis thaliana (Mouse-ear cress).